The primary structure comprises 437 residues: tRNA modification GTPase MnmE (437 aa).

Arg-21, Glu-80, and Arg-120 together coordinate (6S)-5-formyl-5,6,7,8-tetrahydrofolate. Residues 218 to 361 enclose the TrmE-type G domain; it reads GFVVVLAGPP…LLDRVAAAAG (144 aa). Asn-228 is a binding site for K(+). GTP contacts are provided by residues 228 to 233, 247 to 253, and 272 to 275; these read NAGKST, SPIPGTT, and DTAG. Ser-232 contacts Mg(2+). K(+) is bound by residues Ser-247, Ile-249, and Thr-252. Residue Thr-253 participates in Mg(2+) binding. A (6S)-5-formyl-5,6,7,8-tetrahydrofolate-binding site is contributed by Lys-437.

This sequence belongs to the TRAFAC class TrmE-Era-EngA-EngB-Septin-like GTPase superfamily. TrmE GTPase family. Homodimer. Heterotetramer of two MnmE and two MnmG subunits. The cofactor is K(+).

It is found in the cytoplasm. Functionally, exhibits a very high intrinsic GTPase hydrolysis rate. Involved in the addition of a carboxymethylaminomethyl (cmnm) group at the wobble position (U34) of certain tRNAs, forming tRNA-cmnm(5)s(2)U34. This Methylobacterium sp. (strain 4-46) protein is tRNA modification GTPase MnmE.